We begin with the raw amino-acid sequence, 115 residues long: Large ribosomal subunit protein bL19 (115 aa).

Belongs to the bacterial ribosomal protein bL19 family.

Functionally, this protein is located at the 30S-50S ribosomal subunit interface and may play a role in the structure and function of the aminoacyl-tRNA binding site. This is Large ribosomal subunit protein bL19 from Streptococcus pyogenes serotype M1.